The sequence spans 618 residues: Syncytin-B (618 aa).

An N-terminal signal peptide occupies residues 1–17 (MTGFWVLCFVLFPSSLS). At 18–545 (YPESWMPLVN…SWGQWPDLGR (528 aa)) the chain is on the extracellular side. N27 carries an N-linked (GlcNAc...) asparagine glycan. The CXXC signature appears at 44-47 (CWVC). Cystine bridges form between C44/C47, C44/C507, and C499/C506. N-linked (GlcNAc...) asparagine glycosylation is found at N184, N274, and N357. A fusion peptide region spans residues 422 to 442 (LFPFLAGLGISSALGTGIAGL). The interval 482–498 (LQNRRALDLITAEKGGT) is immunosuppression. The short motif at 499-507 (CLFLQEECC) is the CX6CC element. Residues 546 to 566 (WLPWLTPFLGPLLFLFFLLTF) traverse the membrane as a helical segment. Residues 567–618 (GSCLLNCLTRFVSQRLGSFVQDTAKRHVDSILQNFQYKKLPQDSPDEDTIPT) lie on the Cytoplasmic side of the membrane.

It belongs to the gamma type-C retroviral envelope protein family. In terms of assembly, the mature protein consists of a trimer of SU-TM heterodimers. The SU-TM heterodimers are attached by a labile interchain disulfide bond. Synthesized as an inactive precursor that is heavily N-glycosylated and processed likely by furin in the Golgi to yield the mature SU and TM proteins. The cleavage site between SU and TM requires the minimal sequence [KR]-X-[KR]-R. Post-translationally, the CXXC motif is highly conserved across a broad range of retroviral envelope proteins. It is thought to participate in the formation of a labile disulfide bond possibly with the CX6CC motif present in the transmembrane protein. Isomerization of the intersubunit disulfide bond to an SU intrachain disulfide bond is thought to occur upon receptor recognition in order to allow membrane fusion. Highly expressed in placenta where it localizes to syncytiotrophoblasts of the labyrinthine zona. Specifically localizes to syncytiotrophoblast layer II (SynT-II). Also detected at very low levels in ovary.

The protein localises to the cell membrane. Its function is as follows. This endogenous retroviral envelope protein has retained its original fusogenic properties. Together with Syna, participates in trophoblast fusion and the formation of a syncytium during placenta morphogenesis. Synb is specifically involved in formation of syncytiotrophoblast layer II (SynT-II). Promotes myoblast fusion, and may play a role in regeneration of damaged muscle tissue in males. May have immunosuppressive activity. The sequence is that of Syncytin-B from Mus musculus (Mouse).